The following is a 362-amino-acid chain: Peptide chain release factor 1 (362 aa).

Residue Gln-237 is modified to N5-methylglutamine.

This sequence belongs to the prokaryotic/mitochondrial release factor family. Post-translationally, methylated by PrmC. Methylation increases the termination efficiency of RF1.

Its subcellular location is the cytoplasm. In terms of biological role, peptide chain release factor 1 directs the termination of translation in response to the peptide chain termination codons UAG and UAA. The chain is Peptide chain release factor 1 (prfA) from Aquifex aeolicus (strain VF5).